The following is a 402-amino-acid chain: MKFSQATILAIFASSALVSAAPANIVSEQTMVKREDVNAIVELINEIKHINQKRDLAEGEDLLELQRRADSVIGELVSALYNSGVIGLVWDKLTTDPSISSSLSNIIKSAIQGAIVQGGALIQAVWNSGLLGDVFNKLINDTDLRQALLDVGKALFNSAANLISIWLGGSSSSSSAAPAAAAAPATNGASKREIMEAAEYLSERDLASILSWIVQTIKDTGIVQSLVNQVINNPDTVISFLTSALKNGLVIVEDLYDWAKQSGLWDQALVYIQNNAGSWIKALAGLFGNALSNGTITASDINNAGSSSKPTGTTTASTATAAPKAATPAAASAAAPKAATSGSSSGSSSNNADLNALINKYGGGSGSTSTPTVDTSGLSSDVNTLVNAAGQAASSLKKRKLY.

The first 20 residues, 1–20 (MKFSQATILAIFASSALVSA), serve as a signal peptide directing secretion. Residues N140 and N293 are each glycosylated (N-linked (GlcNAc...) asparagine). The disordered stretch occupies residues 302–322 (NNAGSSSKPTGTTTASTATAA). Residues 304–322 (AGSSSKPTGTTTASTATAA) show a composition bias toward low complexity.

This is Opaque-phase-specific protein OP4 (OPS4) from Candida albicans (strain WO-1) (Yeast).